Here is a 366-residue protein sequence, read N- to C-terminus: tRNA/tmRNA (uracil-C(5))-methyltransferase (366 aa).

S-adenosyl-L-methionine-binding residues include Gln190, Tyr218, Asn223, Glu239, and Asp299. Cys324 functions as the Nucleophile in the catalytic mechanism. Glu358 serves as the catalytic Proton acceptor.

It belongs to the class I-like SAM-binding methyltransferase superfamily. RNA M5U methyltransferase family. TrmA subfamily.

It catalyses the reaction uridine(54) in tRNA + S-adenosyl-L-methionine = 5-methyluridine(54) in tRNA + S-adenosyl-L-homocysteine + H(+). The enzyme catalyses uridine(341) in tmRNA + S-adenosyl-L-methionine = 5-methyluridine(341) in tmRNA + S-adenosyl-L-homocysteine + H(+). Functionally, dual-specificity methyltransferase that catalyzes the formation of 5-methyluridine at position 54 (m5U54) in all tRNAs, and that of position 341 (m5U341) in tmRNA (transfer-mRNA). The chain is tRNA/tmRNA (uracil-C(5))-methyltransferase from Escherichia coli (strain ATCC 8739 / DSM 1576 / NBRC 3972 / NCIMB 8545 / WDCM 00012 / Crooks).